Here is a 183-residue protein sequence, read N- to C-terminus: Capsid protein (183 aa).

Residues 136–183 (NAPILSTLPETTVVRQRGRAPRRRTPSPRRRRSQSPRRRRSQSPASQC) are disordered. Residues 151–176 (QRGRAPRRRTPSPRRRRSQSPRRRRS) show a composition bias toward basic residues. A 1; half-length repeat occupies 155 to 161 (APRRRTP). Positions 155-177 (APRRRTPSPRRRRSQSPRRRRSQ) are 3 X 8 AA repeats of S-P-R-R-R-[PR]-S-Q. The Bipartite nuclear localization signal signature appears at 158–175 (RRTPSPRRRRSQSPRRRR). Residues S162 and S170 each carry the phosphoserine; by host modification. 2 consecutive repeat copies span residues 162 to 169 (SPRRRRSQ) and 170 to 177 (SPRRRRSQ). Positions 177-183 (QSPASQC) are RNA binding.

Belongs to the orthohepadnavirus core antigen family. As to quaternary structure, homodimerizes, then multimerizes. Interacts with cytosol exposed regions of viral L glycoprotein present in the reticulum-to-Golgi compartment. Interacts with human FLNB. Phosphorylated form interacts with host importin alpha; this interaction depends on the exposure of the NLS, which itself depends upon genome maturation and/or phosphorylation of the capsid protein. Interacts with host NUP153. Phosphorylated by host SRPK1, SRPK2, and maybe protein kinase C or GAPDH. Phosphorylation is critical for pregenomic RNA packaging. Protein kinase C phosphorylation is stimulated by HBx protein and may play a role in transport of the viral genome to the nucleus at the late step during the viral replication cycle.

Its subcellular location is the virion. The protein localises to the host cytoplasm. Its function is as follows. Self assembles to form an icosahedral capsid. Most capsids appear to be large particles with an icosahedral symmetry of T=4 and consist of 240 copies of capsid protein, though a fraction forms smaller T=3 particles consisting of 180 capsid proteins. Entering capsids are transported along microtubules to the nucleus. Phosphorylation of the capsid is thought to induce exposure of nuclear localization signal in the C-terminal portion of the capsid protein that allows binding to the nuclear pore complex via the importin (karyopherin-) alpha and beta. Capsids are imported in intact form through the nuclear pore into the nuclear basket, where it probably binds NUP153. Only capsids that contain the mature viral genome can release the viral DNA and capsid protein into the nucleoplasm. Immature capsids get stuck in the basket. Capsids encapsulate the pre-genomic RNA and the P protein. Pre-genomic RNA is reverse-transcribed into DNA while the capsid is still in the cytoplasm. The capsid can then either be directed to the nucleus, providing more genomes for transcription, or bud through the endoplasmic reticulum to provide new virions. The chain is Capsid protein from Homo sapiens (Human).